The sequence spans 417 residues: Serine hydroxymethyltransferase (417 aa).

(6S)-5,6,7,8-tetrahydrofolate contacts are provided by residues Leu112 and Gly116–Leu118. Lys221 carries the post-translational modification N6-(pyridoxal phosphate)lysine. (6S)-5,6,7,8-tetrahydrofolate is bound at residue Glu247.

It belongs to the SHMT family. Homodimer. Pyridoxal 5'-phosphate serves as cofactor.

It localises to the cytoplasm. It catalyses the reaction (6R)-5,10-methylene-5,6,7,8-tetrahydrofolate + glycine + H2O = (6S)-5,6,7,8-tetrahydrofolate + L-serine. The protein operates within one-carbon metabolism; tetrahydrofolate interconversion. Its pathway is amino-acid biosynthesis; glycine biosynthesis; glycine from L-serine: step 1/1. Its function is as follows. Catalyzes the reversible interconversion of serine and glycine with tetrahydrofolate (THF) serving as the one-carbon carrier. This reaction serves as the major source of one-carbon groups required for the biosynthesis of purines, thymidylate, methionine, and other important biomolecules. Also exhibits THF-independent aldolase activity toward beta-hydroxyamino acids, producing glycine and aldehydes, via a retro-aldol mechanism. In Borrelia turicatae (strain 91E135), this protein is Serine hydroxymethyltransferase.